Reading from the N-terminus, the 207-residue chain is MSEAAHSGAAPADLVELGRIASAYGVKGWVKVQPHSAQAEVLRTVSHWWLTRPAPQAARDVVASVPRAYQVLQARVHGGAVVAQLAGIDDRDQAEALRGCFVQAARSAFPAPADDEYYWVDLIGCALYSDADGEPRLLGVVDEVFDNGAHAVLKVLRQQIQPGQPGPVPLLDPKGRPLEELVPFVRAHIRHVDLAARRIDSDWPLDY.

The PRC barrel domain occupies 114–207 (DDEYYWVDLI…RIDSDWPLDY (94 aa)).

This sequence belongs to the RimM family. Binds ribosomal protein uS19.

The protein localises to the cytoplasm. Functionally, an accessory protein needed during the final step in the assembly of 30S ribosomal subunit, possibly for assembly of the head region. Essential for efficient processing of 16S rRNA. May be needed both before and after RbfA during the maturation of 16S rRNA. It has affinity for free ribosomal 30S subunits but not for 70S ribosomes. This chain is Ribosome maturation factor RimM, found in Bordetella pertussis (strain Tohama I / ATCC BAA-589 / NCTC 13251).